The chain runs to 3005 residues: Highly reducing polyketide synthase AFT9-1 (3005 aa).

A Ketosynthase family 3 (KS3) domain is found at 1-337 (MDPQQRLLLE…GTNAHAILER (337 aa)). Catalysis depends on for beta-ketoacyl synthase activity residues Cys87, His222, and His260. Residues 437–751 (VFTGQGAQWP…SYMSALVRGS (315 aa)) are malonyl-CoA:ACP transacylase (MAT) domain. Residues 821–936 (HDLLGLKMTD…GSVEVKYAAA (116 aa)) are N-terminal hotdog fold. The interval 821 to 1114 (HDLLGLKMTD…SGLELRRLAP (294 aa)) is dehydratase (DH) domain. The PKS/mFAS DH domain occupies 821-1118 (HDLLGLKMTD…LRRLAPTGQP (298 aa)). The Proton acceptor; for dehydratase activity role is filled by His853. Positions 963–1118 (IEKISSQELY…LRRLAPTGQP (156 aa)) are C-terminal hotdog fold. Residue Asp1028 is the Proton donor; for dehydratase activity of the active site. Positions 1259–1445 (ADDSSKRCYD…MRKASLNMQL (187 aa)) are methyltransferase (CMet) domain. An enoyl reductase (ER) (ER) domain region spans residues 1683 to 1985 (EFMKMPVFTE…QHHRNESTVL (303 aa)). The tract at residues 2008 to 2191 (ATYVVSGGRG…YMSLNVGTIE (184 aa)) is ketoreductase (KR) domain. In terms of domain architecture, Carrier spans 2293-2375 (TRDFEKISQL…SLGAKVASRS (83 aa)). Ser2335 carries the post-translational modification O-(pantetheine 4'-phosphoryl)serine.

The protein operates within mycotoxin biosynthesis. Highly reducing polyketide synthase; part of the gene clusters that mediate the biosynthesis of the host-selective toxins (HSTs) AF-toxins responsible for Alternaria black spot of strawberry disease by the strawberry pathotype. AF-toxin I and III are valine derivatives of 2,3-dyhydroxy-isovaleric acid and 2-hydroxy-isovaleric acid respectively, while AF II is an isoleucine derivative of 2-hydroxy-valeric acid. These derivatives are bound to a 9,10-epoxy-8-hydroxy-9-methyl-decatrienoic acid (EDA) moiety. On cellular level, AF-toxins affect plasma membrane of susceptible cells and cause a sudden increase in loss of K(+) after a few minutes of toxin treatment. The aldo-keto reductase AFTS1 catalyzes the conversion of 2-keto-isovaleric acid (2-KIV) to 2-hydroxy-isovaleric acid (2-HIV) by reduction of its ketone to an alcohol. The acyl-CoA ligase AFT1, the hydrolase AFT2 and the enoyl-CoA hydratases AFT3 and AFT6, but also the polyketide synthase AFT9, the acyl-CoA dehydrogenase AFT10, the cytochrome P450 monooxygenase AFT11 and the oxidoreductase AFT12 are all involved in the biosynthesis of the AK-, AF- and ACT-toxin common EDA structural moiety. The exact function of each enzyme, and of additional enzymes identified within the AF-toxin clusters have still to be determined. The sequence is that of Highly reducing polyketide synthase AFT9-1 from Alternaria alternata (Alternaria rot fungus).